Reading from the N-terminus, the 1121-residue chain is MEAKQESSTVWSTASNNDTGNTPQVHFEAGAVAQIVYSGDQSDRTQQQVVYAADGSSYTSVESAEHTLVYIHPADGTQSQLAVTNAALPTLTEASSSPLGATDSTVDSEDEEEDNDSEDSEMDDWEPRALQPFTPQNLWCEDCNNANPAACIKHGPLHPILNRPVMSKARASLPLVLYIDRFLGGVFTKRRIPKRTQFGPLEGPLVRQSELLDTHIHLKLYMLDPEKEGERAQDLWFDLSDEERCNWMMFVRPAQNHLEQNLVAYQYGSDIFYTSIKNIQPKQELKVWYAASYAEFVNQKVHDVTEEERKVLREQEKNWPCYECNRRFMSSEQLQQHLNMHDDKLNLIQRPKSRGRGRGRKRFGGARRPGRRTKFLCPQTPVESADKTQELLASVDKLQFEERTDGALNGLKVVEMAAESMETETEDALDPPPIHTESLQDEEDSVTPPPVTEIPESAKDDLSHTSPIDPHLTPQDMRRARRIRNAALKHLFIRKSFRPFKCPQCGKAFRDKEKLEQHMRFHGRDGCRHVCHQCGKGFLSSTSLEDHLVLHSDQRNYSCLFCAESYDRLELLKVHVGIHMVNGCFLCPSCKKSFTDFIQVKKHVRSFHSEKVFQCSECDKAFCRPDKLRLHMLRHSDRKDFLCSTCGKQFKRKDKLREHMQRMHNPEREAKKADRIHRTKALKQKEPTTDFESFMFKCRLCMMGFRRRGMLVNHLSKRHPEMRLEEVPELTLPIIKPNRDYYCQYCDKVYKSASKRKAHILKNHPGAELPPSIRKLRPAGPGEPDPMLSTHTQLTGTIATAPVCCPHCAKQYSSKTKMVQHIRKKHPEYQYNSSSNIQAPLAATVISSTPAVITTDGTTAEAVVTTDLLTQAMTELSQTLTTDYRTAQGDFQRIQYIPVSQAGGGLSQPQHIQLQVVQVAPASSPHSQHSTVDVSQLHDPHSYSQHSIQVQHIQVAEPTAAVQANAQVSGQPLSPSSQQAAQELSTAQLTPVTLAQQTLQTSSNQTQGATQHAYLPSNWNYRSYPSEIQMMALPHTQYVIAEASTPVTAAVNSSQVKTTHYVISDGQTELDGKQVSVPSTATQGHPDPLEQPAGGQQATTQYIITTTTNGAGASEVHITKP.

Disordered regions lie at residues 1-24 (MEAK…NTPQ) and 92-125 (TEAS…MDDW). Over residues 106–124 (VDSEDEEEDNDSEDSEMDD) the composition is skewed to acidic residues. One can recognise an SET domain in the interval 173–290 (LPLVLYIDRF…PKQELKVWYA (118 aa)). The segment at 192 to 295 (IPKRTQFGPL…KVWYAASYAE (104 aa)) is N-terminal PR domain; essential for transcriptional activation. The C2H2-type 1 zinc-finger motif lies at 319–341 (WPCYECNRRFMSSEQLQQHLNMH). Disordered stretches follow at residues 350 to 387 (RPKS…SADK) and 419 to 473 (ESME…PHLT). Residues 351–374 (PKSRGRGRGRKRFGGARRPGRRTK) show a composition bias toward basic residues. 9 C2H2-type zinc fingers span residues 500 to 522 (FKCP…MRFH), 529 to 551 (HVCH…LVLH), 557 to 579 (YSCL…VGIH), 585 to 608 (FLCP…RSFH), 613 to 635 (FQCS…MLRH), 641 to 664 (FLCS…QRMH), 696 to 719 (FKCR…SKRH), 741 to 764 (YYCQ…LKNH), and 803 to 826 (VCCP…RKKH). The C-terminal glutamine-rich region; essential for transcriptional activation stretch occupies residues 871-1101 (QAMTELSQTL…PAGGQQATTQ (231 aa)). The tract at residues 1077–1097 (VPSTATQGHPDPLEQPAGGQQ) is disordered.

Belongs to the class V-like SAM-binding methyltransferase superfamily.

It is found in the nucleus. Its function is as follows. Transcriptional activator, essential for early embryonic development and survival of embryonic stem cells (ESCs). Supports cell growth and survival during early development by transcriptionally activating the expression of the translation initiation factor EIF3B, to sustain global translation. Activates the transcription of FLNC. The polypeptide is PR domain zinc finger protein 10 (prdm10) (Danio rerio (Zebrafish)).